The following is an 837-amino-acid chain: MGGSQLKNLKAALKANGLTGQTNVKKSSKKKGKSPREFDREERQKTIERIREQFNPFDVKTNRNKKVGVMRESAAKLAVGKPGITKQAGEDQRKMFYEAKKSSKNRSGGVLDKRFGEKDKNLTSEEIMLERFTKERQRQSSTKRSLFNLDDSDGGEDENVYGEKLTHYGKSLSLEDDFDEGDLGLQHSDSEDFRLKQAGKRNMADQYGDEGLGDDALQEPARKKTKAEVMQEVIAKSKFYKHERQKAQEKLVQDIEGLDDDFESIMSELRTLPKTKPSQTEISTSTDIAPDYDIKVKELVLEKRAAPADRTKTDEEIKKEYEDKQKELEQKRLDRMNGIFNIEDQKDAGVEDLGEEFWEDSDSEEGEYGEYIKAIPDSDDDVDFEKDNNDDNEYDATSNGRPSARVIPSVPCPQIHDDLLNFLKSYPIEEHPSLVKRIVKTYQPKLAEGNKEKLGKFTAVLLRHILFLAEEDYSVNVKEIASLQNELVSILKTLSEKFTIPLSEDCRNIISDIQTRFKESQFYGLSPSDLVFFSVVGMLFSTSDHYHLVITPCLLLIAEFLEQIRFNSLQKLIFGSILVRIAIQYQRISKRYIPELTYFLQTSLRSLIPSTKGETLENKEKQEDNLSIVGSDINWSKVAPSLELHSLFSEDLEKQESIKLSVLVNNLESIDWCITNIWKDLTAFPEIINPFKDILNVAAEVYPGTSKPKQLVEKIEKLLKFQERLPLTLQQHKPLAIPSNTPKFEENFNPDKKSYDPDKTRSELNKMKAQLKKERKFTMKEIRKDTRFEARQGIEEKKKEYADYHSKMARIVNQISTEEGAEKNKYEREKKLRNTKR.

6 disordered regions span residues 1 to 45, 131 to 162, 204 to 228, 373 to 406, 738 to 761, and 815 to 837; these read MGGS…ERQK, RFTK…NVYG, ADQY…TKAE, KAIP…SARV, PSNT…DKTR, and ISTE…NTKR. Residues 34–45 show a composition bias toward basic and acidic residues; the sequence is SPREFDREERQK. Composition is skewed to acidic residues over residues 150 to 160, 207 to 217, and 377 to 394; these read DDSDGGEDENV, YGDEGLGDDAL, and DSDD…DNEY. 2 stretches are compositionally biased toward basic and acidic residues: residues 743–761 and 820–837; these read KFEE…DKTR and GAEK…NTKR.

The protein belongs to the NOP14 family. In terms of assembly, component of the ribosomal small subunit (SSU) processome.

Its subcellular location is the nucleus. It is found in the nucleolus. In terms of biological role, involved in nucleolar processing of pre-18S ribosomal RNA. Has a role in the nuclear export of 40S pre-ribosomal subunit to the cytoplasm. The chain is Probable nucleolar complex protein 14 (NOP14) from Kluyveromyces lactis (strain ATCC 8585 / CBS 2359 / DSM 70799 / NBRC 1267 / NRRL Y-1140 / WM37) (Yeast).